The chain runs to 141 residues: Galactose-6-phosphate isomerase subunit LacA (141 aa).

The protein belongs to the LacAB/RpiB family. Heteromultimeric protein consisting of LacA and LacB.

The catalysed reaction is aldehydo-D-galactose 6-phosphate = keto-D-tagatose 6-phosphate. Its pathway is carbohydrate metabolism; D-galactose 6-phosphate degradation; D-tagatose 6-phosphate from D-galactose 6-phosphate: step 1/1. In Streptococcus pneumoniae (strain 70585), this protein is Galactose-6-phosphate isomerase subunit LacA.